The primary structure comprises 192 residues: Potassium-transporting ATPase KdpC subunit (192 aa).

The helical transmembrane segment at 14-34 threads the bilayer; it reads LTGVLVVLCGLIYPAMVTGIA.

This sequence belongs to the KdpC family. As to quaternary structure, the system is composed of three essential subunits: KdpA, KdpB and KdpC.

Its subcellular location is the cell membrane. In terms of biological role, part of the high-affinity ATP-driven potassium transport (or Kdp) system, which catalyzes the hydrolysis of ATP coupled with the electrogenic transport of potassium into the cytoplasm. This subunit acts as a catalytic chaperone that increases the ATP-binding affinity of the ATP-hydrolyzing subunit KdpB by the formation of a transient KdpB/KdpC/ATP ternary complex. In Bacillus cytotoxicus (strain DSM 22905 / CIP 110041 / 391-98 / NVH 391-98), this protein is Potassium-transporting ATPase KdpC subunit.